The primary structure comprises 71 residues: Small ribosomal subunit protein bS21 (71 aa).

This sequence belongs to the bacterial ribosomal protein bS21 family.

In Wigglesworthia glossinidia brevipalpis, this protein is Small ribosomal subunit protein bS21.